We begin with the raw amino-acid sequence, 365 residues long: IgG receptor FcRn large subunit p51 (365 aa).

The signal sequence occupies residues 1–23 (MGVPRPQPWALGLLLFLLPGSLG). An alpha-1 region spans residues 24–110 (AESHLSLLYH…AFKALGGKGP (87 aa)). Residues 24–297 (AESHLSLLYH…VELESPAKSS (274 aa)) are Extracellular-facing. The tract at residues 111–200 (YTLQGLLGCE…ERGRGNLEWK (90 aa)) is alpha-2. Disulfide bonds link cysteine 119-cysteine 182 and cysteine 221-cysteine 275. A glycan (N-linked (GlcNAc...) asparagine) is linked at asparagine 125. The tract at residues 201–290 (EPPSMRLKAR…GLAQPLRVEL (90 aa)) is alpha-3. The region spanning 202-289 (PPSMRLKARP…AGLAQPLRVE (88 aa)) is the Ig-like C1-type domain. The interval 291–297 (ESPAKSS) is connecting peptide. A helical membrane pass occupies residues 298-321 (VLVVGIVIGVLLLTAAAVGGALLW). Residues 322–365 (RRMRSGLPAPWISLRGDDTGVLLPTPGEAQDADLKDVNVIPATA) are Cytoplasmic-facing. The residue at position 334 (serine 334) is a Phosphoserine.

Belongs to the immunoglobulin superfamily. In terms of assembly, fcRn complex consists of two subunits: p51, and p14 which is equivalent to beta-2-microglobulin. It forms an MHC class I-like heterodimer. Interacts with albumin/ALB; this interaction regulates ALB homeostasis. (Microbial infection) Interacts with Echovirus 6, Echovirus 11 and Echovirus 30 capsid protein VP1. In terms of tissue distribution, expressed in full-term placenta, heart, lung, liver, muscle, kidney, pancreas, and both fetal and adult small intestine.

The protein resides in the cell membrane. Its subcellular location is the endosome membrane. Functionally, cell surface receptor that transfers passive humoral immunity from the mother to the newborn. Binds to the Fc region of monomeric immunoglobulin gamma and mediates its selective uptake from milk. IgG in the milk is bound at the apical surface of the intestinal epithelium. The resultant FcRn-IgG complexes are transcytosed across the intestinal epithelium and IgG is released from FcRn into blood or tissue fluids. Throughout life, contributes to effective humoral immunity by recycling IgG and extending its half-life in the circulation. Mechanistically, monomeric IgG binding to FcRn in acidic endosomes of endothelial and hematopoietic cells recycles IgG to the cell surface where it is released into the circulation. In addition of IgG, regulates homeostasis of the other most abundant circulating protein albumin/ALB. In terms of biological role, (Microbial infection) Acts as an uncoating receptor for a panel of echoviruses including Echovirus 5, 6, 7, 9, 11, 13, 25 and 29. The sequence is that of IgG receptor FcRn large subunit p51 (FCGRT) from Homo sapiens (Human).